Here is a 331-residue protein sequence, read N- to C-terminus: D-alanine--D-alanine ligase (331 aa).

One can recognise an ATP-grasp domain in the interval 116-316 (KRLWQTHSLP…YEDFVLQLAA (201 aa)). Residue 142 to 197 (ADRLGLPLIVKPAREGSSIGLTKVTSVAELPAAYEKAARLDRDVMAEQFIDGDELT) participates in ATP binding. Residues Asp269, Glu283, and Asn285 each coordinate Mg(2+).

This sequence belongs to the D-alanine--D-alanine ligase family. Requires Mg(2+) as cofactor. Mn(2+) is required as a cofactor.

It is found in the cytoplasm. The catalysed reaction is 2 D-alanine + ATP = D-alanyl-D-alanine + ADP + phosphate + H(+). The protein operates within cell wall biogenesis; peptidoglycan biosynthesis. In terms of biological role, cell wall formation. This chain is D-alanine--D-alanine ligase, found in Ralstonia nicotianae (strain ATCC BAA-1114 / GMI1000) (Ralstonia solanacearum).